The primary structure comprises 430 residues: Aspartate aminotransferase, mitochondrial (430 aa).

The transit peptide at 1–29 directs the protein to the mitochondrion; that stretch reads MALLHSSRILSGMAAAFHPGLAAAASARA. Residue Thr-48 is modified to Phosphothreonine. Lys-59 bears the N6-acetyllysine mark. Gly-65 lines the substrate pocket. N6-acetyllysine; alternate is present on Lys-73. Lys-73 carries the N6-succinyllysine; alternate modification. At Lys-82 the chain carries N6-acetyllysine. Lys-90 carries the post-translational modification N6-acetyllysine; alternate. Lys-90 is modified (N6-succinyllysine; alternate). Tyr-96 is subject to 3'-nitrotyrosine; alternate. Residue Tyr-96 is modified to Phosphotyrosine; alternate. Residues Lys-107 and Lys-122 each carry the N6-acetyllysine; alternate modification. Residues Lys-107 and Lys-122 each carry the N6-succinyllysine; alternate modification. Residue Ser-143 is modified to Phosphoserine. The residue at position 159 (Lys-159) is an N6-acetyllysine; alternate. Residue Lys-159 is modified to N6-succinyllysine; alternate. Residue Trp-162 participates in substrate binding. An N6-acetyllysine; alternate modification is found at Lys-185. At Lys-185 the chain carries N6-succinyllysine; alternate. Substrate is bound at residue Asn-215. Lys-227 carries the post-translational modification N6-succinyllysine. Lys-234 is subject to N6-acetyllysine. N6-acetyllysine; alternate is present on residues Lys-279 and Lys-296. Lys-279 is modified (N6-(pyridoxal phosphate)lysine; alternate). Lys-296 carries the post-translational modification N6-succinyllysine; alternate. N6-acetyllysine is present on Lys-302. At Lys-309 the chain carries N6-acetyllysine; alternate. Position 309 is an N6-succinyllysine; alternate (Lys-309). Arg-313 is modified (asymmetric dimethylarginine). Residue Lys-338 is modified to N6-acetyllysine; alternate. Lys-338 carries the post-translational modification N6-succinyllysine; alternate. Lys-345 carries the post-translational modification N6-acetyllysine. The residue at position 363 (Lys-363) is an N6-acetyllysine; alternate. N6-succinyllysine; alternate is present on Lys-363. N6-acetyllysine is present on residues Lys-364 and Lys-387. Lys-396 and Lys-404 each carry N6-acetyllysine; alternate. 2 positions are modified to N6-succinyllysine; alternate: Lys-396 and Lys-404. Arg-407 is a binding site for substrate.

It belongs to the class-I pyridoxal-phosphate-dependent aminotransferase family. In terms of assembly, homodimer. The cofactor is pyridoxal 5'-phosphate. Acetylation of Lys-296, Lys-345 and Lys-363 is observed in liver mitochondria from fasted mice but not from fed mice. In terms of tissue distribution, detected in brain (at protein level).

The protein resides in the mitochondrion matrix. The protein localises to the cell membrane. It carries out the reaction L-aspartate + 2-oxoglutarate = oxaloacetate + L-glutamate. The enzyme catalyses L-kynurenine + 2-oxoglutarate = kynurenate + L-glutamate + H2O. Functionally, catalyzes the irreversible transamination of the L-tryptophan metabolite L-kynurenine to form kynurenic acid (KA). As a member of the malate-aspartate shuttle, it has a key role in the intracellular NAD(H) redox balance. Is important for metabolite exchange between mitochondria and cytosol, and for amino acid metabolism. Facilitates cellular uptake of long-chain free fatty acids. The polypeptide is Aspartate aminotransferase, mitochondrial (Got2) (Mus musculus (Mouse)).